Consider the following 125-residue polypeptide: Large ribosomal subunit protein bL17 (125 aa).

This sequence belongs to the bacterial ribosomal protein bL17 family. In terms of assembly, part of the 50S ribosomal subunit. Contacts protein L32.

This is Large ribosomal subunit protein bL17 from Acinetobacter baumannii (strain AB0057).